A 217-amino-acid chain; its full sequence is Eukaryotic translation initiation factor 4E (217 aa).

Residues 1–11 (MATVEPETTPT) are compositionally biased toward low complexity. The tract at residues 1 to 27 (MATVEPETTPTTNPPPAEEEKTESNQE) is disordered. N-acetylalanine is present on Ala-2. Thr-22 bears the Phosphothreonine mark. Positions 37–40 (HPLQ) are EIF4EBP1/2/3 binding. MRNA is bound at residue 56-57 (WQ). The tract at residues 73–77 (WALYN) is EIF4EBP1/2/3 binding. 102-103 (WE) contributes to the mRNA binding site. The EIF4EBP1/2/3 binding stretch occupies residues 132–139 (ETLLCLIG). Residues 157-162 (RAKGDK) and 205-207 (TKS) contribute to the mRNA site. Ser-209 carries the phosphoserine; by PKC and MKNK2 modification.

It belongs to the eukaryotic initiation factor 4E family. In terms of assembly, eIF4F is a multi-subunit complex, the composition of which varies with external and internal environmental conditions. It is composed of at least EIF4A, EIF4E and EIF4G1/EIF4G3. EIF4E is also known to interact with other partners. Interacts with EIF4ENIF1/4E-T; promotes recruitment to P-bodies and import into the nucleus. Hypophosphorylated EIF4EBP1, EIF4EBP2 and EIF4EBP3 compete with EIF4G1/EIF4G3 to interact with EIF4E; insulin stimulated MAP-kinase (MAPK1 and MAPK3) phosphorylation of EIF4EBP1 causes dissociation of the complex allowing EIF4G1/EIF4G3 to bind and consequent initiation of translation. Interacts mutually exclusive with EIF4A1 or EIF4A2. Interacts with NGDN and PIWIL2. Component of the CYFIP1-EIF4E-FMR1 complex composed of CYFIP, EIF4E and FMR1. Interacts directly with CYFIP1. Interacts with CLOCK. Binds to MKNK2 in nucleus. Interacts with LIMD1, WTIP and AJUBA. Interacts with APOBEC3G in an RNA-dependent manner. Interacts with LARP1. Interacts with METTL3. Interacts with RBM24; this interaction prevents EIF4E from binding to p53/TP53 mRNA and inhibits the assembly of translation initiation complex. Interacts with DDX3X; interaction is direct and in an RNA-independent manner; this interaction enhances EIF4E cap-binding ability and is required for the repression of cap-dependent translation and the increase of IRES-mediated translation. DDX3X competes with EIF4G1 for interaction with EIF4E. Interacts with EIF4G1; which in a mutual exclusive interaction associates either with EIF1 or with EIF4E on a common binding site. Interacts with BTG4 and CNOT7. Interacts with LRPPRC (via N-terminus); the interaction promotes association of EIF4E with 4ESE-containing mRNAs. Interacts with mRNA cleavage enzyme CPSF3 and its cofactor CPSF1. Interacts (via RING-type zinc finger) with PML; the interaction results in conformational changes of both interacting proteins and reduces EIF4E affinity for the 5' m7G cap of mRNA, thus reducing EIF4E-mediated mRNA nuclear export. Interacts with homeobox protein HHEX/PRH; the interaction inhibits EIF4E-mediated mRNA nuclear export. Interacts with homeobox protein HOXA9; the interaction positively regulates EIF4E-mediated mRNA nuclear export. Interacts with homeobox protein EMX2. As to quaternary structure, (Microbial infection) Interacts with murine norovirus viral genome-linked protein; this interaction plays a role in translation of viral proteins. In terms of processing, phosphorylation increases the ability of the protein to bind to mRNA caps and to form the eIF4F complex. Phosphorylation also enhances its mRNA transport function. Phosphorylation at Ser-209 is not essential for protein synthesis.

The protein localises to the cytoplasm. It localises to the P-body. It is found in the stress granule. Its subcellular location is the nucleus. The protein resides in the nucleus speckle. The protein localises to the nuclear body. Acts in the cytoplasm to initiate and regulate protein synthesis and is required in the nucleus for export of a subset of mRNAs from the nucleus to the cytoplasm which promotes processes such as RNA capping, processing and splicing. Component of the protein complex eIF4F, which is involved in the recognition of the mRNA cap, ATP-dependent unwinding of 5'-terminal secondary structure and recruitment of mRNA to the ribosome. This protein recognizes and binds the 7-methylguanosine (m7G)-containing mRNA cap during an early step in the initiation of protein synthesis and facilitates ribosome binding by inducing the unwinding of the mRNAs secondary structures. Together with EIF4G1, antagonizes the scanning promoted by EIF1-EIF4G1 and is required for TISU translation, a process where the TISU element recognition makes scanning unnecessary. In addition to its role in translation initiation, also acts as a regulator of translation and stability in the cytoplasm. Component of the CYFIP1-EIF4E-FMR1 complex which binds to the mRNA cap and mediates translational repression: in the complex, EIF4E mediates the binding to the mRNA cap. Component of a multiprotein complex that sequesters and represses translation of proneurogenic factors during neurogenesis. In P-bodies, component of a complex that mediates the storage of translationally inactive mRNAs in the cytoplasm and prevents their degradation. May play an important role in spermatogenesis through translational regulation of stage-specific mRNAs during germ cell development. As well as its roles in translation, also involved in mRNA nucleocytoplasmic transport. Its role in mRNA export from the nucleus to the cytoplasm relies on its ability to bind the m7G cap of RNAs and on the presence of the 50-nucleotide EIF4E sensitivity element (4ESE) in the 3'UTR of sensitive transcripts. Interaction with the 4ESE is mediated by LRPPRC which binds simultaneously to both EIF4E and the 4ESE, thereby acting as a platform for assembly for the RNA export complex. EIF4E-dependent mRNA export is independent of ongoing protein or RNA synthesis and is also NFX1-independent but is XPO1-dependent with LRPPRC interacting with XPO1 to form an EIF4E-dependent mRNA export complex. Alters the composition of the cytoplasmic face of the nuclear pore to promote RNA export by reducing RANBP2 expression, relocalizing nucleoporin NUP214 and increasing expression of RANBP1 and RNA export factors DDX19 and GLE1. Promotes the nuclear export of cyclin CCND1 mRNA. Promotes the nuclear export of NOS2/iNOS mRNA. Promotes the nuclear export of MDM2 mRNA. Also promotes the export of additional mRNAs, including others involved in the cell cycle. In the nucleus, binds to capped splice factor-encoding mRNAs and stimulates their nuclear export to enhance splice factor production by increasing their cytoplasmic availability to the translation machinery. May also regulate splicing through interaction with the spliceosome in an RNA and m7G cap-dependent manner. Also binds to some pre-mRNAs and may play a role in their recruitment to the spliceosome. Promotes steady-state capping of a subset of coding and non-coding RNAs by mediating nuclear export of capping machinery mRNAs including RNMT, RNGTT and RAMAC to enhance their translation. Stimulates mRNA 3'-end processing by promoting the expression of several core cleavage complex factors required for mRNA cleavage and polyadenylation, and may also have a direct effect through its interaction with the CPSF3 cleavage enzyme. Rescues cells from apoptosis by promoting activation of serine/threonine-protein kinase AKT1 through mRNA export of NBS1 which potentiates AKT1 phosphorylation and also through mRNA export of AKT1 effectors, allowing for increased production of these proteins. The protein is Eukaryotic translation initiation factor 4E of Mus musculus (Mouse).